The sequence spans 306 residues: Non-specific ribonucleoside hydrolase RihC (306 aa).

His-235 is a catalytic residue.

This sequence belongs to the IUNH family. RihC subfamily.

In terms of biological role, hydrolyzes both purine and pyrimidine ribonucleosides with a broad-substrate specificity. This Salmonella typhi protein is Non-specific ribonucleoside hydrolase RihC.